A 70-amino-acid chain; its full sequence is uncharacterized protein (70 aa).

Residues 4–24 (VKTIAMLAMLVIVAALIYMGY) traverse the membrane as a helical segment.

Its subcellular location is the host membrane. This is an uncharacterized protein from Dryophytes versicolor (chameleon treefrog).